The following is a 342-amino-acid chain: GTPase Obg (342 aa).

In terms of domain architecture, Obg spans 1 to 159 (MQFIDQAQIE…KLLRLELKLL (159 aa)). The OBG-type G domain occupies 160–330 (AEVGIIGLPN…MLQEVWGILD (171 aa)). GTP contacts are provided by residues 166–173 (GLPNAGKS), 191–195 (FTTLI), 213–216 (DIPG), 280–283 (NKID), and 311–313 (SAV). Residues S173 and T193 each coordinate Mg(2+).

This sequence belongs to the TRAFAC class OBG-HflX-like GTPase superfamily. OBG GTPase family. Monomer. It depends on Mg(2+) as a cofactor.

It localises to the cytoplasm. An essential GTPase which binds GTP, GDP and possibly (p)ppGpp with moderate affinity, with high nucleotide exchange rates and a fairly low GTP hydrolysis rate. Plays a role in control of the cell cycle, stress response, ribosome biogenesis and in those bacteria that undergo differentiation, in morphogenesis control. In Nostoc sp. (strain PCC 7120 / SAG 25.82 / UTEX 2576), this protein is GTPase Obg.